A 295-amino-acid polypeptide reads, in one-letter code: Farnesyl diphosphate synthase (295 aa).

Residues lysine 46, arginine 49, and histidine 78 each coordinate isopentenyl diphosphate. The Mg(2+) site is built by aspartate 85 and aspartate 91. Arginine 96 lines the (2E)-geranyl diphosphate pocket. Residue arginine 97 coordinates isopentenyl diphosphate. The (2E)-geranyl diphosphate site is built by lysine 180, threonine 181, glutamine 220, and lysine 237.

The protein belongs to the FPP/GGPP synthase family. It depends on Mg(2+) as a cofactor.

The protein localises to the cytoplasm. The catalysed reaction is isopentenyl diphosphate + (2E)-geranyl diphosphate = (2E,6E)-farnesyl diphosphate + diphosphate. The chain is Farnesyl diphosphate synthase (ispA) from Haemophilus influenzae (strain ATCC 51907 / DSM 11121 / KW20 / Rd).